The sequence spans 183 residues: ATP-dependent protease subunit HslV (183 aa).

T13 is an active-site residue. Na(+) is bound by residues G168, C171, and T174.

Belongs to the peptidase T1B family. HslV subfamily. In terms of assembly, a double ring-shaped homohexamer of HslV is capped on each side by a ring-shaped HslU homohexamer. The assembly of the HslU/HslV complex is dependent on binding of ATP.

It localises to the cytoplasm. The catalysed reaction is ATP-dependent cleavage of peptide bonds with broad specificity.. With respect to regulation, allosterically activated by HslU binding. Functionally, protease subunit of a proteasome-like degradation complex believed to be a general protein degrading machinery. The sequence is that of ATP-dependent protease subunit HslV from Xanthomonas axonopodis pv. citri (strain 306).